Here is a 694-residue protein sequence, read N- to C-terminus: TBC1 domain family member 14 (694 aa).

Ser92 is subject to Phosphoserine. The span at 272–289 shows a compositional bias: basic and acidic residues; sequence TAQKDSKKTQKEYEDKAG. The disordered stretch occupies residues 272-305; the sequence is TAQKDSKKTQKEYEDKAGRPSRPPSPKQNVRKNL. Ser296 is modified (phosphoserine). A Rab-GAP TBC domain is found at 402–612; the sequence is GIPPSVRGKV…RIWDVFCRDG (211 aa).

Interacts with ULK1. May interact with RAB11A and RAB11B, but does not exhibit any GTPase-activating activity toward these proteins. Interacts with TRAPPC8.

The protein localises to the golgi apparatus. It is found in the cis-Golgi network. It localises to the trans-Golgi network. Plays a role in the regulation of starvation-induced autophagosome formation. Together with the TRAPPIII complex, regulates a constitutive trafficking step from peripheral recycling endosomes to the early Golgi, maintaining the cycling pool of ATG9 required for initiation of autophagy. This is TBC1 domain family member 14 (Tbc1d14) from Mus musculus (Mouse).